The chain runs to 420 residues: Type II methyltransferase M.HgiCI (420 aa).

Residues 2–417 (LKFIDLFAGI…LDLFKSADLA (416 aa)) enclose the SAM-dependent MTase C5-type domain. C75 is an active-site residue.

It belongs to the class I-like SAM-binding methyltransferase superfamily. C5-methyltransferase family.

The enzyme catalyses a 2'-deoxycytidine in DNA + S-adenosyl-L-methionine = a 5-methyl-2'-deoxycytidine in DNA + S-adenosyl-L-homocysteine + H(+). A methylase that recognizes the double-stranded sequence 5'-GGYRCC-3', methylates C-5 on both strands, and protects the DNA from cleavage by the HgiCI endonuclease. This chain is Type II methyltransferase M.HgiCI (hgiCIM), found in Herpetosiphon aurantiacus (Herpetosiphon giganteus).